Here is a 367-residue protein sequence, read N- to C-terminus: MTVTSQVKPEDEMLNWGRLILDGVSYSDMVGARDRPKEITWFDYWMSLANEYEQEAERKVALGHDLSAGELLMSAALCAQYAQFLWFDERRQKGQARKVELYQKAAPLLSPPAERHELVVDGIPMPVYVRIPEGPGPHPAVIMLGGLESTKEESFQMENLVLDRGMATATFDGPGQGEMFEYKRIAGDYEKYTSAVVDLLTKLEAIRNDAIGVLGRSLGGNYALKSAACEPRLAACISWGGFSDLDYWDLETPLTKESWKYVSKVDTLEEARLHVHAALETRDVLSQIACPTYILHGVHDEVPLSFVDTVLELVPAEHLNLVVEKDGDHCCHNLGIRPRLEMADWLYDVLVAGKKVAPTMKGWPLNG.

Catalysis depends on residues glutamate 148, serine 217, aspartate 300, and histidine 329.

This sequence belongs to the AB hydrolase superfamily. As to quaternary structure, homodimer.

The catalysed reaction is 2,6-dihydroxypseudooxynicotine + H2O = 2,6-dihydroxypyridine + 4-(methylamino)butanoate + H(+). It participates in alkaloid degradation; nicotine degradation; 2,6-dihydroxypyridine and 4-(methylamino)butanoate from 6-hydroxypseudooxynicotine: step 2/2. In terms of biological role, L-nicotine is used as a growth substrate. Plays a role in nicotine catabolism by cleaving a C-C bond in 2,6-dihydroxypseudooxynicotine. This is 2,6-dihydropseudooxynicotine hydrolase from Paenarthrobacter nicotinovorans (Arthrobacter nicotinovorans).